The sequence spans 338 residues: Lumican (338 aa).

The N-terminal stretch at Met-1–Gly-18 is a signal peptide. Gln-19 bears the Pyrrolidone carboxylic acid mark. 4 positions are modified to sulfotyrosine: Tyr-20, Tyr-21, Tyr-23, and Tyr-30. Positions Phe-28 to Pro-66 constitute an LRRNT domain. 8 LRR repeats span residues Gly-67–Asn-88, Asp-91–Lys-114, Gln-117–Lys-137, Ser-138–Val-159, Asn-160–Lys-181, Ser-185–Thr-205, Ser-206–Arg-227, and Gly-230–Ser-250. Asn-88 carries N-linked (GlcNAc...) (keratan sulfate) asparagine glycosylation. Asn-127 is a glycosylation site (N-linked (GlcNAc...) (keratan sulfate) asparagine). Asn-160 carries N-linked (GlcNAc...) (keratan sulfate) asparagine glycosylation. Asn-252 carries an N-linked (GlcNAc...) (keratan sulfate) asparagine glycan. LRR repeat units follow at residues Ser-255–Leu-276 and Glu-277–Lys-296. A disulfide bridge links Cys-295 with Cys-328. The residue at position 304 (Ser-304) is a Phosphoserine. One copy of the LRR 11 repeat lies at Lys-305 to Tyr-326.

It belongs to the small leucine-rich proteoglycan (SLRP) family. SLRP class II subfamily. As to quaternary structure, binds to laminin. Contains keratan sulfate. In terms of processing, cys-37, Cys-41, Cys-43 and Cys-53 are involved in disulfide bonds. As to expression, cornea and other tissues.

It is found in the secreted. The protein resides in the extracellular space. Its subcellular location is the extracellular matrix. The polypeptide is Lumican (Lum) (Mus musculus (Mouse)).